A 169-amino-acid chain; its full sequence is Disulfide bond formation protein B 1 (169 aa).

Topologically, residues 1–13 (MSALLKPLDNRLF) are cytoplasmic. A helical transmembrane segment spans residues 14–30 (WPAVAIGGLLILAFVLY). At 31–48 (LQHVRGFAPCSLCIFIRL) the chain is on the periplasmic side. Cysteine 40 and cysteine 43 are oxidised to a cystine. The helical transmembrane segment at 49–64 (DVLGLVLAGIVGSLAP) threads the bilayer. At 65 to 71 (RSRIAGG) the chain is on the cytoplasmic side. Residues 72–89 (IAALGMLAASLGGIYHAW) form a helical membrane-spanning segment. Topologically, residues 90–145 (SLVAEEKLAAQGMGSCKMFMGFPEWIPLDTWLPQVFQPEGLCGEVVWTLLGQSMAV) are periplasmic. Cysteines 105 and 131 form a disulfide. A helical membrane pass occupies residues 146–164 (WSLALFVFCLLVLAAKLAF). At 165 to 169 (GRRTA) the chain is on the cytoplasmic side.

This sequence belongs to the DsbB family.

Its subcellular location is the cell inner membrane. Its function is as follows. Required for disulfide bond formation in some periplasmic proteins. Acts by oxidizing the DsbA protein. The sequence is that of Disulfide bond formation protein B 1 from Pseudomonas aeruginosa (strain UCBPP-PA14).